We begin with the raw amino-acid sequence, 35 residues long: Beta/omega-theraphotoxin-Bp1a (35 aa).

Intrachain disulfides connect cysteine 2–cysteine 16, cysteine 9–cysteine 21, and cysteine 15–cysteine 28.

It belongs to the neurotoxin 10 (Hwtx-1) family. 54 (ProTx-1) subfamily. An unnatural amidation at Ser-35 provokes a 14-fold increased toxin ability to inhibit Nav1.2/SCN2A and a ~2-fold decreased toxin ability to inhibit both Nav1.5/SCN5A and Nav1.7/SCN9A. In terms of tissue distribution, expressed by the venom gland.

It localises to the secreted. Its function is as follows. Ion channel impairing toxin that inhibits voltage-gated calcium channel Cav3.1/CACNA1G (IC(50)=53 nM), voltage-gated potassium channels Kv2.1/KCNB1 (IC(50)=411 nM), all sodium channels tested (Nav1.2/SCN2A (IC(50)=60-104 nM), Nav1.5/SCN5A (IC(50)=76-358 nM), Nav1.6/SCN8A (IC(50)=21-133 nM), Nav1.7/SCN9A (IC(50)=51-95 nM), and Nav1.8/SCN10A) as well as the nociceptor cation channel TRPA1 (IC(50)=389 nM). Acts as a potent and selective blocker of voltage-gated calcium channel Cav3.1/CACNA1G, but not of Cav3.2/CACNA1H, and Cav3.3/CACNA1I. On Nav1.7/SCN9A, primarily interacts with the DII and DIV voltage-sensor domains. Also acts as an inhibitor of nociceptor cation channel TRPA1 (IC(50)~389 nM) by binding to the S1-S4 gating domain of TRPA1. It shows moderate affinity for lipid bilayers. The sequence is that of Beta/omega-theraphotoxin-Bp1a from Bumba pulcherrimaklaasi (Tarantula spider).